The chain runs to 155 residues: Small ribosomal subunit protein uS7 (155 aa).

It belongs to the universal ribosomal protein uS7 family. In terms of assembly, part of the 30S ribosomal subunit. Contacts proteins S9 and S11.

In terms of biological role, one of the primary rRNA binding proteins, it binds directly to 16S rRNA where it nucleates assembly of the head domain of the 30S subunit. Is located at the subunit interface close to the decoding center, probably blocks exit of the E-site tRNA. The polypeptide is Small ribosomal subunit protein uS7 (Prosthecochloris aestuarii (strain DSM 271 / SK 413)).